Reading from the N-terminus, the 118-residue chain is Large ribosomal subunit protein uL24 (118 aa).

It belongs to the universal ribosomal protein uL24 family. Part of the 50S ribosomal subunit.

In terms of biological role, one of two assembly initiator proteins, it binds directly to the 5'-end of the 23S rRNA, where it nucleates assembly of the 50S subunit. One of the proteins that surrounds the polypeptide exit tunnel on the outside of the subunit. The chain is Large ribosomal subunit protein uL24 from Parasynechococcus marenigrum (strain WH8102).